Here is a 185-residue protein sequence, read N- to C-terminus: Ribosome maturation factor RimM (185 aa).

In terms of domain architecture, PRC barrel spans 106 to 185 (SGEYYWKDLL…IIEVDWDPGF (80 aa)).

This sequence belongs to the RimM family. Binds ribosomal protein uS19.

Its subcellular location is the cytoplasm. Its function is as follows. An accessory protein needed during the final step in the assembly of 30S ribosomal subunit, possibly for assembly of the head region. Essential for efficient processing of 16S rRNA. May be needed both before and after RbfA during the maturation of 16S rRNA. It has affinity for free ribosomal 30S subunits but not for 70S ribosomes. In Sodalis glossinidius (strain morsitans), this protein is Ribosome maturation factor RimM.